The primary structure comprises 1850 residues: Serine/threonine-protein kinase WNK (1850 aa).

3 disordered regions span residues 1–108 (MPDS…NALE), 221–253 (QHSIFDRSRLNKIPPNTSLASSSSPSDAANNDK), and 272–309 (MVNDGPRTLTGDDMDKMVSEEERARKEQEKREEEEKAA). Low complexity-rich tracts occupy residues 16-26 (SSVSSTTASTT) and 234-251 (PPNTSLASSSSPSDAANN). Residues 284-309 (DMDKMVSEEERARKEQEKREEEEKAA) show a composition bias toward basic and acidic residues. Residues 334–596 (LKFDEELGRG…VKQLLVDDFF (263 aa)) enclose the Protein kinase domain. Residues Ser344, 416 to 419 (TELM), and Lys466 each bind ATP. Asp483 acts as the Proton acceptor in catalysis. Residues 693 to 749 (DHRLLEIKRAKEEEERIREEAEIKEELRLRAEAKEKEKERLEKERLEKKAAAAAAAN) are a coiled coil. Residues 727–742 (EKEKERLEKERLEKKA) show a composition bias toward basic and acidic residues. Disordered regions lie at residues 727 to 790 (EKEK…AQQP), 890 to 943 (TPAS…KRKS), 1040 to 1130 (EPPT…AAKP), 1188 to 1249 (SPVS…TPAI), 1588 to 1636 (GTHI…PSHS), 1721 to 1740 (ASLSLPASPPPNTEIPDNEG), and 1769 to 1850 (IIPS…IENV). Residues 751-760 (NPTPIPPTPA) are compositionally biased toward pro residues. Polar residues predominate over residues 776–790 (STQTSAEIQQSAQQP). The span at 890–934 (TPASIASPSPAPSATDVASTTAPVTPAPTPTTTTDGGAAAASTTT) shows a compositional bias: low complexity. Over residues 1062–1071 (PKIEIEKTPP) the composition is skewed to basic and acidic residues. Over residues 1077–1101 (QEPNNVQVTNVRKVSQESNAESVQS) the composition is skewed to polar residues. Low complexity predominate over residues 1188–1207 (SPVSHSLSSNSSPSATTHSN). Residues 1208-1217 (MSSIQSTTSV) are compositionally biased toward polar residues. A compositionally biased stretch (low complexity) spans 1771 to 1805 (PSSRQSVRSATSSSPSTPPSSSSAPPKSLSSPTKS). Positions 1806–1820 (YVSHCSLSIGYGSTA) are enriched in polar residues. The span at 1821 to 1832 (SSEQQQREPSPS) shows a compositional bias: low complexity.

Belongs to the protein kinase superfamily. Ser/Thr protein kinase family. WNK subfamily. In terms of assembly, interacts with gck-3 (via C-terminus). It depends on Mg(2+) as a cofactor. Expressed in pharynx, nervous system, hypodermis, spermatheca, excretory cell and canal and body wall muscles.

It is found in the cytoplasm. It carries out the reaction L-seryl-[protein] + ATP = O-phospho-L-seryl-[protein] + ADP + H(+). The enzyme catalyses L-threonyl-[protein] + ATP = O-phospho-L-threonyl-[protein] + ADP + H(+). With respect to regulation, activated in response to hyperosmotic stress: cell shrinkage promotes formation of a membraneless compartment that concentrates wnk-1 with its downstrem substrates. In terms of biological role, serine/threonine-protein kinase component of the WNK3-SPAK/OSR1 kinase cascade, which plays an important role in the regulation of electrolyte homeostasis and regulatory volume increase in response to hyperosmotic stress. Wnk-1 mediates regulatory volume increase in response to hyperosmotic stress by acting as a molecular crowding sensor, which senses cell shrinkage and mediates formation of a membraneless compartment by undergoing liquid-liquid phase separation. The membraneless compartment concentrates wnk-1 with its substrates. Phosphorylates gck-3. Plays a role in osmotic stress responses during which it increases gpdh-1 translation, likely by phosphorylating gck-3. Essential for larval development and the tubular formation of the excretory canals. This Caenorhabditis elegans protein is Serine/threonine-protein kinase WNK.